The primary structure comprises 155 residues: Glutamyl-tRNA(Gln) amidotransferase subunit C, chloroplastic/mitochondrial (155 aa).

Residues 1 to 52 (MATRALLAVIYASPNRCYISPSRIKIQSLTCSSSSHYYQRQSRKNHRIARSY) constitute a chloroplast and mitochondrion transit peptide.

Belongs to the GatC family. Subunit of the heterotrimeric GatCAB amidotransferase (AdT) complex, composed of A, B and C subunits.

It is found in the mitochondrion. Its subcellular location is the plastid. The protein resides in the chloroplast. It carries out the reaction L-glutamyl-tRNA(Gln) + L-glutamine + ATP + H2O = L-glutaminyl-tRNA(Gln) + L-glutamate + ADP + phosphate + H(+). Functionally, allows the formation of correctly charged Gln-tRNA(Gln) through the transamidation of misacylated Glu-tRNA(Gln) in chloroplasts and mitochondria. The reaction takes place in the presence of glutamine and ATP through an activated gamma-phospho-Glu-tRNA(Gln). This Arabidopsis thaliana (Mouse-ear cress) protein is Glutamyl-tRNA(Gln) amidotransferase subunit C, chloroplastic/mitochondrial.